The following is a 384-amino-acid chain: Thylakoid membrane protein TERC, chloroplastic (384 aa).

Residues 1–48 (MSLASVIHHGILPPAKSDRIFLTIPVFPPDFRARGWTKSPFSLLINPS) constitute a chloroplast transit peptide. The Stromal portion of the chain corresponds to 49–115 (LASAANRRLS…DYQQEETYKT (67 aa)). The segment at 68–104 (GIDQEDEEKESRELLPHKNDENATTSRSSSSVDSGGL) is disordered. Basic and acidic residues predominate over residues 76–88 (KESRELLPHKNDE). Residues 116-136 (SFKTVALCVGTAVAFGIGIGL) traverse the membrane as a helical segment. Residues 137-145 (KEGVGKASE) lie on the Lumenal, thylakoid side of the membrane. The helical transmembrane segment at 146 to 166 (FFAGYILEQSLSVDNLFVFVL) threads the bilayer. Residues 167-180 (VFKYFKVPLMYQNK) lie on the Stromal side of the membrane. A helical membrane pass occupies residues 181 to 201 (VLTYGIAGAIVFRFTLILLGT). The Lumenal, thylakoid portion of the chain corresponds to 202–206 (ATLQK). The chain crosses the membrane as a helical span at residues 207–227 (FEAVNLLLAAVLLYSSFKLFA). The Stromal segment spans residues 228-275 (SEEDDTDLSDNFIVKTCQRFIPVTSSYDGNRFFTKHDGILKATPLLLT). The helical transmembrane segment at 276 to 296 (VAVIELSDIAFAVDSIPAVFG) threads the bilayer. Topologically, residues 297 to 301 (VTRDP) are lumenal, thylakoid. A helical transmembrane segment spans residues 302–322 (FIVLTSNLFAILGLRSLYTLI). At 323 to 335 (SEGMDELEYLQPS) the chain is on the stromal side. Residues 336 to 356 (IAVVLGFIGVKMILDFFGFHI) form a helical membrane-spanning segment. A topological domain (lumenal, thylakoid) is located at residue Ser-357. A helical membrane pass occupies residues 358–378 (TEASLGVVALSLSTGVLLSLT). The Stromal segment spans residues 379 to 384 (NKSSDS).

Interacts with ALB3. In terms of tissue distribution, expressed in roots, rosette and cauline leaves, stems and flowers.

The protein resides in the plastid. It is found in the chloroplast thylakoid membrane. Integral thylakoid membrane protein that plays a crucial role in thylakoid membrane biogenesis and thylakoid formation in early chloroplast development. Is essential for de novo synthesis of photosystem II (PSII) core proteins and required for efficient insertion of thylakoid membrane proteins, presumably via interaction with ALB3. May assist synthesis of thylakoid membrane proteins at the membrane insertion step. The polypeptide is Thylakoid membrane protein TERC, chloroplastic (Arabidopsis thaliana (Mouse-ear cress)).